Here is a 480-residue protein sequence, read N- to C-terminus: Acetylxylan esterase (480 aa).

A signal peptide spans 1-19 (MNRKLFMTGLLMLAMTMQA).

The protein belongs to the AB hydrolase superfamily.

The catalysed reaction is Deacetylation of xylans and xylo-oligosaccharides.. It functions in the pathway glycan degradation; xylan degradation. Functionally, involved in degradation of plant cell wall polysaccharides. Is an acetyl esterase with broad substrate specificity, releasing acetic acid from acetylated xylo-oligosaccharides and acetylated xylan as well as xylose-tetraacetate, 4-O-methylumbelliferyl acetate, glucose-pentaacetate, and cephalosporin C. Appears to have greater activity on oligosaccharides than on polymeric substrates. Is also able to release acetic acid from xylo-oligosaccharides with 4-O-methylglucuronic acid side groups proximally located to O-acetyl esters. Preferentially targets xylo-oligosaccharides possessing three or more O-acetyl groups, but following their depletion it is active on the less acetylated portion of the substrate. This is Acetylxylan esterase from Xylanibacter ruminicola (strain ATCC 19189 / DSM 19721 / CIP 105475 / JCM 8958 / 23) (Prevotella ruminicola).